We begin with the raw amino-acid sequence, 113 residues long: Cell division protein FtsB (113 aa).

Topologically, residues 1–3 are cytoplasmic; it reads MRL. A helical membrane pass occupies residues 4–21; sequence ISLLLFVLLLAIQYPLWL. The Periplasmic segment spans residues 22 to 113; it reads GKGGWLRVWE…PNSPAATGRH (92 aa). The stretch at 34–63 forms a coiled coil; the sequence is HQVQEQATRNQMLKLRNAKLEGEVKDLQDG. The interval 93-113 is disordered; the sequence is KVSATPPLPPPPNSPAATGRH.

This sequence belongs to the FtsB family. In terms of assembly, part of a complex composed of FtsB, FtsL and FtsQ.

The protein localises to the cell inner membrane. In terms of biological role, essential cell division protein. May link together the upstream cell division proteins, which are predominantly cytoplasmic, with the downstream cell division proteins, which are predominantly periplasmic. The chain is Cell division protein FtsB from Cupriavidus pinatubonensis (strain JMP 134 / LMG 1197) (Cupriavidus necator (strain JMP 134)).